The sequence spans 661 residues: Polyadenylate-binding protein, cytoplasmic and nuclear (661 aa).

Over residues 1 to 11 (MSAAETNQVQE) the composition is skewed to polar residues. The interval 1-61 (MSAAETNQVQ…SAEEQGESSG (61 aa)) is disordered. Residues 20-51 (SSSSPAAGGATTATTTNNAESSDATSSSVPAD) show a composition bias toward low complexity. RRM domains lie at 67-145 (ASLY…WSQR), 155-232 (GNIF…KHVS), 248-325 (TNIY…RAQK), and 351-428 (VNLF…LAQR). The disordered stretch occupies residues 473 to 563 (FPPNGRGNAP…PNRPAGGNVP (91 aa)). The segment covering 501 to 511 (EQWPRPGPNGQ) has biased composition (pro residues). A compositionally biased stretch (polar residues) spans 523-532 (QDFNGQNMRP). Residues 533–549 (QQQQQQQQQQQQQQQQQ) show a composition bias toward low complexity. A PABC domain is found at 563–644 (PAKDLAALIA…ALNAFEEYKN (82 aa)).

Belongs to the polyadenylate-binding protein type-1 family.

It is found in the cytoplasm. The protein resides in the nucleus. Functionally, binds the poly(A) tail of mRNA. Appears to be an important mediator of the multiple roles of the poly(A) tail in mRNA biogenesis, stability and translation. In the nucleus, involved in both mRNA cleavage and polyadenylation. Is also required for efficient mRNA export to the cytoplasm. Acts in concert with a poly(A)-specific nuclease (PAN) to affect poly(A) tail shortening, which may occur concomitantly with either nucleocytoplasmic mRNA transport or translational initiation. In the cytoplasm, stimulates translation initiation and regulates mRNA decay through translation termination-coupled poly(A) shortening, probably mediated by PAN. The protein is Polyadenylate-binding protein, cytoplasmic and nuclear (PAB1) of Lodderomyces elongisporus (strain ATCC 11503 / CBS 2605 / JCM 1781 / NBRC 1676 / NRRL YB-4239) (Yeast).